A 347-amino-acid chain; its full sequence is Phenylalanine--tRNA ligase alpha subunit (347 aa).

Glu261 serves as a coordination point for Mg(2+).

Belongs to the class-II aminoacyl-tRNA synthetase family. Phe-tRNA synthetase alpha subunit type 1 subfamily. As to quaternary structure, tetramer of two alpha and two beta subunits. Requires Mg(2+) as cofactor.

It localises to the cytoplasm. It catalyses the reaction tRNA(Phe) + L-phenylalanine + ATP = L-phenylalanyl-tRNA(Phe) + AMP + diphosphate + H(+). This Streptococcus pyogenes serotype M1 protein is Phenylalanine--tRNA ligase alpha subunit.